Here is a 486-residue protein sequence, read N- to C-terminus: Inosine-5'-monophosphate dehydrogenase (486 aa).

2 consecutive CBS domains span residues I99–E154 and M156–E215. NAD(+) contacts are provided by residues D247 and G294 to G296. K(+) is bound by residues G296 and G298. An IMP-binding site is contributed by S299. K(+) is bound at residue C301. The Thioimidate intermediate role is filled by C301. IMP is bound by residues D334 to G336, G357 to N358, and Y381 to G385. Catalysis depends on R397, which acts as the Proton acceptor. Position 412 (E412) interacts with IMP. K(+) is bound by residues E466, S467, and H468.

It belongs to the IMPDH/GMPR family. Homotetramer. K(+) serves as cofactor.

It carries out the reaction IMP + NAD(+) + H2O = XMP + NADH + H(+). The protein operates within purine metabolism; XMP biosynthesis via de novo pathway; XMP from IMP: step 1/1. With respect to regulation, mycophenolic acid (MPA) is a non-competitive inhibitor that prevents formation of the closed enzyme conformation by binding to the same site as the amobile flap. In contrast, mizoribine monophosphate (MZP) is a competitive inhibitor that induces the closed conformation. MPA is a potent inhibitor of mammalian IMPDHs but a poor inhibitor of the bacterial enzymes. MZP is a more potent inhibitor of bacterial IMPDH. In terms of biological role, catalyzes the conversion of inosine 5'-phosphate (IMP) to xanthosine 5'-phosphate (XMP), the first committed and rate-limiting step in the de novo synthesis of guanine nucleotides, and therefore plays an important role in the regulation of cell growth. The chain is Inosine-5'-monophosphate dehydrogenase from Pyrococcus horikoshii (strain ATCC 700860 / DSM 12428 / JCM 9974 / NBRC 100139 / OT-3).